The sequence spans 205 residues: Imidazole glycerol phosphate synthase subunit HisH (205 aa).

A Glutamine amidotransferase type-1 domain is found at 1–205 (MITIVDYQMG…RFATAPVEVA (205 aa)). The active-site Nucleophile is cysteine 79. Catalysis depends on residues histidine 182 and glutamate 184.

Heterodimer of HisH and HisF.

Its subcellular location is the cytoplasm. It catalyses the reaction 5-[(5-phospho-1-deoxy-D-ribulos-1-ylimino)methylamino]-1-(5-phospho-beta-D-ribosyl)imidazole-4-carboxamide + L-glutamine = D-erythro-1-(imidazol-4-yl)glycerol 3-phosphate + 5-amino-1-(5-phospho-beta-D-ribosyl)imidazole-4-carboxamide + L-glutamate + H(+). It carries out the reaction L-glutamine + H2O = L-glutamate + NH4(+). It functions in the pathway amino-acid biosynthesis; L-histidine biosynthesis; L-histidine from 5-phospho-alpha-D-ribose 1-diphosphate: step 5/9. Functionally, IGPS catalyzes the conversion of PRFAR and glutamine to IGP, AICAR and glutamate. The HisH subunit catalyzes the hydrolysis of glutamine to glutamate and ammonia as part of the synthesis of IGP and AICAR. The resulting ammonia molecule is channeled to the active site of HisF. This chain is Imidazole glycerol phosphate synthase subunit HisH, found in Rhodopirellula baltica (strain DSM 10527 / NCIMB 13988 / SH1).